The primary structure comprises 416 residues: Serine hydroxymethyltransferase (416 aa).

(6S)-5,6,7,8-tetrahydrofolate is bound by residues Leu121 and 125 to 127 (GHL). Position 229 is an N6-(pyridoxal phosphate)lysine (Lys229).

This sequence belongs to the SHMT family. In terms of assembly, homodimer. Pyridoxal 5'-phosphate is required as a cofactor.

It is found in the cytoplasm. The enzyme catalyses (6R)-5,10-methylene-5,6,7,8-tetrahydrofolate + glycine + H2O = (6S)-5,6,7,8-tetrahydrofolate + L-serine. It functions in the pathway one-carbon metabolism; tetrahydrofolate interconversion. It participates in amino-acid biosynthesis; glycine biosynthesis; glycine from L-serine: step 1/1. Functionally, catalyzes the reversible interconversion of serine and glycine with tetrahydrofolate (THF) serving as the one-carbon carrier. This reaction serves as the major source of one-carbon groups required for the biosynthesis of purines, thymidylate, methionine, and other important biomolecules. Also exhibits THF-independent aldolase activity toward beta-hydroxyamino acids, producing glycine and aldehydes, via a retro-aldol mechanism. The protein is Serine hydroxymethyltransferase of Neisseria gonorrhoeae (strain ATCC 700825 / FA 1090).